Here is a 346-residue protein sequence, read N- to C-terminus: Glucose-6-phosphatase 3 (346 aa).

At 1-25 (MESTLSAGIMMAEALQNQLPGLENM) the chain is on the lumenal side. A helical transmembrane segment spans residues 26–46 (WLWVTFLADPKNLFQFYFPAV). Topologically, residues 47–56 (YYASRRLGIS) are cytoplasmic. The helical transmembrane segment at 57–77 (LFWIAFITEWLNLVFKWFLFG) threads the bilayer. At 78 to 115 (DRPFWWVHESGYSAQTPVQIHQFPSSCETGPGSPSGHC) the chain is on the lumenal side. Position 79 (Arg-79) interacts with substrate. Residue His-114 is the Proton donor of the active site. The chain crosses the membrane as a helical span at residues 116–135 (MITGAALWPVMIAISSQVAS). At 136-140 (QTRSP) the chain is on the cytoplasmic side. Residues 141 to 162 (WVRVIPGLAYCTFLLAVGLSRV) traverse the membrane as a helical segment. Arg-161 is a binding site for substrate. Topologically, residues 163 to 167 (FLLAH) are lumenal. The active-site Nucleophile is His-167. Residues 168-186 (FPHQVLAGLLAGVILGWLL) traverse the membrane as a helical segment. Residues 187 to 197 (SPRVPMERELS) are Cytoplasmic-facing. The chain crosses the membrane as a helical span at residues 198–218 (FYGLTALTLMLGASLMYWTLF). Residues 219 to 254 (TLGLDLSWSINLASKWCDRPEWVLVDSRPFASLSRD) lie on the Lumenal side of the membrane. Residues 255–273 (SGSALGLGIALHTPCYAQI) form a helical membrane-spanning segment. The Cytoplasmic segment spans residues 274 to 283 (RRVHLGNGQK). A helical transmembrane segment spans residues 284–304 (IACFVLAMGLLVFLEWLGHPP). Residues 305-307 (QIS) are Lumenal-facing. A helical transmembrane segment spans residues 308-328 (LFYIFNFLKFTLWPCLVVALV). At 329–346 (PWMVHTLSAQEAPPIRSS) the chain is on the cytoplasmic side.

It belongs to the glucose-6-phosphatase family. Expressed in liver and kidney. It is the major glucose-6-phosphatase expressed in the small intestine.

It is found in the endoplasmic reticulum membrane. It carries out the reaction D-glucose 6-phosphate + H2O = D-glucose + phosphate. Its pathway is carbohydrate biosynthesis; gluconeogenesis. Inhibited by vanadate. Hydrolyzes glucose-6-phosphate to glucose in the endoplasmic reticulum. May form with the glucose-6-phosphate transporter (SLC37A4/G6PT) a ubiquitously expressed complex responsible for glucose production through glycogenolysis and gluconeogenesis. Probably required for normal neutrophil function. The polypeptide is Glucose-6-phosphatase 3 (G6pc3) (Rattus norvegicus (Rat)).